Here is a 396-residue protein sequence, read N- to C-terminus: Chaperone protein DnaJ 1 (396 aa).

The J domain maps to 10–75 (DYYKVLGVPK…KKRKEYDEAR (66 aa)). Residues 127–137 (LFNRGGAGPGT) show a composition bias toward gly residues. A disordered region spans residues 127 to 149 (LFNRGGAGPGTGTRTQPRRGQDI). Residues 163–241 (GATVPLRMSS…CKGSGRAKSS (79 aa)) form a CR-type zinc finger. 8 residues coordinate Zn(2+): Cys176, Cys179, Cys192, Cys195, Cys215, Cys218, Cys229, and Cys232. 4 CXXCXGXG motif repeats span residues 176–183 (CKACSGTG), 192–199 (CPTCVGTG), 215–222 (CPDCKGRG), and 229–236 (CEICKGSG).

The protein belongs to the DnaJ family. As to quaternary structure, homodimer. Zn(2+) serves as cofactor.

The protein resides in the cytoplasm. In terms of biological role, participates actively in the response to hyperosmotic and heat shock by preventing the aggregation of stress-denatured proteins and by disaggregating proteins, also in an autonomous, DnaK-independent fashion. Unfolded proteins bind initially to DnaJ; upon interaction with the DnaJ-bound protein, DnaK hydrolyzes its bound ATP, resulting in the formation of a stable complex. GrpE releases ADP from DnaK; ATP binding to DnaK triggers the release of the substrate protein, thus completing the reaction cycle. Several rounds of ATP-dependent interactions between DnaJ, DnaK and GrpE are required for fully efficient folding. Also involved, together with DnaK and GrpE, in the DNA replication of plasmids through activation of initiation proteins. The sequence is that of Chaperone protein DnaJ 1 from Streptomyces avermitilis (strain ATCC 31267 / DSM 46492 / JCM 5070 / NBRC 14893 / NCIMB 12804 / NRRL 8165 / MA-4680).